A 396-amino-acid chain; its full sequence is Phosphoglycerate kinase (396 aa).

Residues 21–23, arginine 36, 59–62, arginine 119, and arginine 156 each bind substrate; these read DFN and HLGK. ATP is bound by residues lysine 206, glycine 294, glutamate 325, and 352 to 355; that span reads GGDS.

Belongs to the phosphoglycerate kinase family. As to quaternary structure, monomer.

Its subcellular location is the cytoplasm. It catalyses the reaction (2R)-3-phosphoglycerate + ATP = (2R)-3-phospho-glyceroyl phosphate + ADP. Its pathway is carbohydrate degradation; glycolysis; pyruvate from D-glyceraldehyde 3-phosphate: step 2/5. The chain is Phosphoglycerate kinase from Listeria monocytogenes serovar 1/2a (strain ATCC BAA-679 / EGD-e).